The primary structure comprises 140 residues: Mite allergen Der p 21.0101 (140 aa).

The N-terminal stretch at 1–19 is a signal peptide; sequence MKFIITLFAAIVMAAAVSG. Immunodominant conformational IgE-binding epitope regions lie at residues 20–53 and 108–140; these read FIVGDKKEDEWRMAFDRLMMEELETKIDQVEKGL and YNYEFALESIKLLIKKLDELAKKVKAVNPDEYY.

The protein belongs to the mite group 5 allergen family. In terms of assembly, monomer. Homodimer. In terms of tissue distribution, expressed in the epithelium, lumen and microvilli of the midgut, and in feces.

Its subcellular location is the cytoplasm. It is found in the endoplasmic reticulum. It localises to the vesicle. The protein resides in the secreted. This Dermatophagoides pteronyssinus (European house dust mite) protein is Mite allergen Der p 21.0101.